A 441-amino-acid chain; its full sequence is POC1 centriolar protein homolog A (441 aa).

7 WD repeats span residues 16–55 (GHRD…RAYR), 58–97 (GHKD…ESTA), 100–139 (AHTG…FLFS), 142–181 (QHIN…CIQS), 184–223 (EHGG…LIQH), 226–265 (VHSG…LLYT), and 268–307 (GHQG…GSYP). Residues 347-376 (DLEPHITEMSVKDRSSPLSYTSRSVDQHHP) are disordered. Basic and acidic residues predominate over residues 348-361 (LEPHITEMSVKDRS). Positions 400–427 (LTRTVGILEQRLSLTEDKLKECIEQQQA) form a coiled coil.

Belongs to the WD repeat POC1 family. In terms of assembly, interacts with pat.

It localises to the cytoplasm. The protein localises to the cytoskeleton. Functionally, may play an important role in centriole assembly and/or stability and ciliogenesis. The polypeptide is POC1 centriolar protein homolog A (poc1a) (Xenopus laevis (African clawed frog)).